Consider the following 143-residue polypeptide: Large ribosomal subunit protein uL11 (143 aa).

This sequence belongs to the universal ribosomal protein uL11 family. As to quaternary structure, part of the ribosomal stalk of the 50S ribosomal subunit. Interacts with L10 and the large rRNA to form the base of the stalk. L10 forms an elongated spine to which L12 dimers bind in a sequential fashion forming a multimeric L10(L12)X complex. One or more lysine residues are methylated.

In terms of biological role, forms part of the ribosomal stalk which helps the ribosome interact with GTP-bound translation factors. The sequence is that of Large ribosomal subunit protein uL11 from Pseudomonas paraeruginosa (strain DSM 24068 / PA7) (Pseudomonas aeruginosa (strain PA7)).